The chain runs to 219 residues: Large ribosomal subunit protein mL67 (219 aa).

This sequence belongs to the mitochondrion-specific ribosomal protein mL67 family.

The protein localises to the nucleus. It is found in the mitochondrion. In terms of biological role, transcription factor involved in regulation of RNA polymerase II-dependent transcription. Also involved in regulation of mitochondrial DNA recombination, maintenance and repair, and generation of homoplasmic cells. The sequence is that of Large ribosomal subunit protein mL67 (MHR1) from Kluyveromyces lactis (strain ATCC 8585 / CBS 2359 / DSM 70799 / NBRC 1267 / NRRL Y-1140 / WM37) (Yeast).